The primary structure comprises 292 residues: 33 kDa chaperonin (292 aa).

Disulfide bonds link cysteine 230–cysteine 232 and cysteine 263–cysteine 266.

This sequence belongs to the HSP33 family. Post-translationally, under oxidizing conditions two disulfide bonds are formed involving the reactive cysteines. Under reducing conditions zinc is bound to the reactive cysteines and the protein is inactive.

It localises to the cytoplasm. Functionally, redox regulated molecular chaperone. Protects both thermally unfolding and oxidatively damaged proteins from irreversible aggregation. Plays an important role in the bacterial defense system toward oxidative stress. The sequence is that of 33 kDa chaperonin from Shigella boydii serotype 4 (strain Sb227).